Reading from the N-terminus, the 381-residue chain is Putative acetyl-CoA C-acetyltransferase VraB (381 aa).

Cysteine 86 acts as the Acyl-thioester intermediate in catalysis. Histidine 338 serves as the catalytic Proton acceptor.

This sequence belongs to the thiolase-like superfamily. Thiolase family.

The polypeptide is Putative acetyl-CoA C-acetyltransferase VraB (vraB) (Staphylococcus haemolyticus (strain JCSC1435)).